Consider the following 2159-residue polypeptide: ATP-binding cassette sub-family A member 7 (2159 aa).

Residues 22–42 traverse the membrane as a helical segment; sequence PIQLLVELLWPLFLFFILVAV. Over 43 to 546 the chain is Extracellular; it reads RHSHPPLEHH…DVFLRVLSRS (504 aa). A disulfide bridge links Cys75 with Cys222. A glycan (N-linked (GlcNAc...) asparagine) is linked at Asn309. 6 helical membrane passes run 547–567, 590–610, 623–643, 652–672, 678–698, and 732–752; these read LPLFLTLAWIYSVALTVKAVV, LGWFLSCLGPFLVSAALLVLV, VVIFLFLAAFAVATVAQSFLL, LAAACGGLAYFALYLPYVLCV, LHLGGLLAASLLSPVAFGFGC, and AFLLLDAVIYGLALWYLEAVC. One can recognise an ABC transporter 1 domain in the interval 804 to 1035; sequence VSIRGLKKHF…LGCGYYLTLV (232 aa). 838–845 serves as a coordination point for ATP; it reads GHNGAGKT. The helical transmembrane segment at 846–866 threads the bilayer; that stretch reads TTLSILSGLFPPSSGSASILG. 2 disordered regions span residues 1042–1088 and 1172–1192; these read VTHD…GAVP and GGDSRPQLHLRTCTPQPPTGP. Over residues 1044-1061 the composition is skewed to basic and acidic residues; that stretch reads HDAKGDSEDPRREKKSDG. Polar residues predominate over residues 1062-1081; sequence NGRTSDTAFTRGTSDKSNQA. Residues 1246–1266 form a helical membrane-spanning segment; that stretch reads VVLPALFVGLALFFSLIVPPF. Residues 1267 to 1551 lie on the Extracellular side of the membrane; that stretch reads GQYPPLQLSP…TLIASSVDVL (285 aa). Cys1359 and Cys1373 are disulfide-bonded. A run of 5 helical transmembrane segments spans residues 1552–1572, 1598–1618, 1635–1655, 1663–1683, and 1743–1763; these read VSICVVFAMSFVPASFTLVLI, FLWDMCNYLVAVCIVVFIFLA, LLLLLYGWSITPLMYPASFFF, VVLTCINLFIGINSSMATFVL, and IIGKNLLAMMAQGPLFLLITL. An ABC transporter 2 domain is found at 1807-2039; it reads LVLRDLTKVY…FGAGHTLTLR (233 aa). An ATP-binding site is contributed by 1841-1848; sequence GVNGAGKT. The disordered stretch occupies residues 2118–2159; it reads QGEEEESSRQEAEEEEVSKPGRQHPKRVSRFLEDPSSVETMI. A compositionally biased stretch (acidic residues) spans 2119–2133; it reads GEEEESSRQEAEEEE.

This sequence belongs to the ABC transporter superfamily. ABCA family. In terms of processing, N-glycosylated. Widely expressed with higher expression in brain, lung, adrenal gland, spleen and hematopoietic tissues (at protein level). In the brain, expressed in cortex, cerebellum, hippocampus, olfactory bulb, neurons, astrocytes and microglia (at protein level). Also expressed in adipocytes and macrophages (at protein level). Expressed in thymocytes (at protein level). Highly expressed in spleen and hematopoietic tissues. Expressed in brain, lung, macrophages, microglia, oligodendrocytes and neurons.

The protein resides in the cell membrane. It is found in the golgi apparatus membrane. The protein localises to the early endosome membrane. Its subcellular location is the cytoplasm. It localises to the cell projection. The protein resides in the ruffle membrane. It is found in the phagocytic cup. Its function is as follows. Probable ATP-binding cassette (ABC) transporter that plays a role in lipid homeostasis and macrophage-mediated phagocytosis. Binds APOA1 and may function in apolipoprotein-mediated phospholipid efflux from cells. May also mediate cholesterol efflux. May regulate cellular ceramide homeostasis during keratinocyte differentiation. Involved in lipid raft organization and CD1D localization on thymocytes and antigen-presenting cells, which plays an important role in natural killer T-cell development and activation. Plays a role in phagocytosis of apoptotic cells by macrophages. Macrophage phagocytosis is stimulated by APOA1 or APOA2, probably by stabilization of ABCA7. Also involved in phagocytic clearance of amyloid-beta by microglia cells and macrophages. Further limits amyloid-beta production by playing a role in the regulation of amyloid-beta A4 precursor protein (APP) endocytosis and/or processing. This chain is ATP-binding cassette sub-family A member 7 (Abca7), found in Mus musculus (Mouse).